The sequence spans 403 residues: Na(+)/H(+) antiporter NhaA (403 aa).

A run of 12 helical transmembrane segments spans residues Ile-25–Phe-45, Leu-70–Ile-90, Ile-105–Ala-125, Gly-136–Gly-156, Val-165–Ala-185, Glu-188–Leu-208, Val-213–Ser-233, Gly-234–Gly-254, Val-269–Val-289, Ile-302–Val-322, Gly-340–Phe-360, and Val-369–Ala-389.

The protein belongs to the NhaA Na(+)/H(+) (TC 2.A.33) antiporter family.

It is found in the cell inner membrane. The catalysed reaction is Na(+)(in) + 2 H(+)(out) = Na(+)(out) + 2 H(+)(in). Na(+)/H(+) antiporter that extrudes sodium in exchange for external protons. This Maricaulis maris (strain MCS10) (Caulobacter maris) protein is Na(+)/H(+) antiporter NhaA.